The chain runs to 245 residues: Exosome complex component RRP41 (245 aa).

Ala2 bears the N-acetylalanine mark.

The protein belongs to the RNase PH family. As to quaternary structure, component of the RNA exosome core complex (Exo-9), composed of EXOSC1, EXOSC2, EXOSC3, EXOSC4, EXOSC5, EXOSC6, EXOSC7, EXOSC8 and EXOSC9; within the complex interacts with EXOSC2, EXOSC7 and EXOSC9. The catalytically inactive RNA exosome core complex (Exo-9) associates with the catalytic subunit EXOSC10/RRP6. Exo-9 may associate with DIS3 to form the nucleolar exosome complex, or DIS3L to form the cytoplasmic exosome complex. Exo-9 is formed by a hexameric base ring consisting of the heterodimers EXOSC4-EXOSC9, EXOSC5-EXOSC8 and EXOSC6-EXOSC7, and a cap ring consisting of EXOSC1, EXOSC2 and EXOSC3. The RNA exosome complex associates with cofactors C1D/RRP47, MPHOSPH6/MPP6 and MTREX/MTR4. Interacts with DDX60. Interacts with DIS3; the interaction is direct.

It localises to the cytoplasm. Its subcellular location is the nucleus. The protein localises to the nucleolus. The protein resides in the nucleoplasm. In terms of biological role, non-catalytic component of the RNA exosome complex which has 3'-&gt;5' exoribonuclease activity and participates in a multitude of cellular RNA processing and degradation events. In the nucleus, the RNA exosome complex is involved in proper maturation of stable RNA species such as rRNA, snRNA and snoRNA, in the elimination of RNA processing by-products and non-coding 'pervasive' transcripts, such as antisense RNA species and promoter-upstream transcripts (PROMPTs), and of mRNAs with processing defects, thereby limiting or excluding their export to the cytoplasm. The RNA exosome may be involved in Ig class switch recombination (CSR) and/or Ig variable region somatic hypermutation (SHM) by targeting AICDA deamination activity to transcribed dsDNA substrates. In the cytoplasm, the RNA exosome complex is involved in general mRNA turnover and specifically degrades inherently unstable mRNAs containing AU-rich elements (AREs) within their 3' untranslated regions, and in RNA surveillance pathways, preventing translation of aberrant mRNAs. It seems to be involved in degradation of histone mRNA. The catalytic inactive RNA exosome core complex of 9 subunits (Exo-9) is proposed to play a pivotal role in the binding and presentation of RNA for ribonucleolysis, and to serve as a scaffold for the association with catalytic subunits and accessory proteins or complexes. EXOSC4 binds to ARE-containing RNAs. In Mus musculus (Mouse), this protein is Exosome complex component RRP41 (Exosc4).